A 254-amino-acid polypeptide reads, in one-letter code: PF03932 family protein CutC (254 aa).

This sequence belongs to the CutC family.

It is found in the cytoplasm. The polypeptide is PF03932 family protein CutC (Yersinia pestis bv. Antiqua (strain Antiqua)).